The sequence spans 477 residues: Bifunctional protein HldE (477 aa).

A ribokinase region spans residues 1 to 319; sequence MTPPLPGFRD…AALGGGPAPA (319 aa). 195-198 contacts ATP; sequence NLAE. Asp-264 is an active-site residue. The segment at 346-477 is cytidylyltransferase; that stretch reads MTNGCFDLLH…DLIARIRSRG (132 aa).

It in the N-terminal section; belongs to the carbohydrate kinase PfkB family. In the C-terminal section; belongs to the cytidylyltransferase family. In terms of assembly, homodimer.

The catalysed reaction is D-glycero-beta-D-manno-heptose 7-phosphate + ATP = D-glycero-beta-D-manno-heptose 1,7-bisphosphate + ADP + H(+). It catalyses the reaction D-glycero-beta-D-manno-heptose 1-phosphate + ATP + H(+) = ADP-D-glycero-beta-D-manno-heptose + diphosphate. It participates in nucleotide-sugar biosynthesis; ADP-L-glycero-beta-D-manno-heptose biosynthesis; ADP-L-glycero-beta-D-manno-heptose from D-glycero-beta-D-manno-heptose 7-phosphate: step 1/4. Its pathway is nucleotide-sugar biosynthesis; ADP-L-glycero-beta-D-manno-heptose biosynthesis; ADP-L-glycero-beta-D-manno-heptose from D-glycero-beta-D-manno-heptose 7-phosphate: step 3/4. Functionally, catalyzes the phosphorylation of D-glycero-D-manno-heptose 7-phosphate at the C-1 position to selectively form D-glycero-beta-D-manno-heptose-1,7-bisphosphate. Its function is as follows. Catalyzes the ADP transfer from ATP to D-glycero-beta-D-manno-heptose 1-phosphate, yielding ADP-D-glycero-beta-D-manno-heptose. This Halorhodospira halophila (strain DSM 244 / SL1) (Ectothiorhodospira halophila (strain DSM 244 / SL1)) protein is Bifunctional protein HldE.